Here is a 91-residue protein sequence, read N- to C-terminus: UPF0223 protein SAB0963 (91 aa).

This sequence belongs to the UPF0223 family.

This is UPF0223 protein SAB0963 from Staphylococcus aureus (strain bovine RF122 / ET3-1).